The sequence spans 393 residues: Elongation factor Tu (393 aa).

In terms of domain architecture, tr-type G spans 10-203 (KPHVNIGTIG…AVDNYIPEPV (194 aa)). The G1 stretch occupies residues 19 to 26 (GHVDHGKT). 19–26 (GHVDHGKT) is a binding site for GTP. T26 lines the Mg(2+) pocket. Positions 60 to 64 (GITIS) are G2. Positions 81-84 (DCPG) are G3. Residues 81–85 (DCPGH) and 136–139 (NKVD) each bind GTP. The tract at residues 136 to 139 (NKVD) is G4. The G5 stretch occupies residues 173–175 (SAL).

Belongs to the TRAFAC class translation factor GTPase superfamily. Classic translation factor GTPase family. EF-Tu/EF-1A subfamily. Monomer.

The protein resides in the cytoplasm. The enzyme catalyses GTP + H2O = GDP + phosphate + H(+). In terms of biological role, GTP hydrolase that promotes the GTP-dependent binding of aminoacyl-tRNA to the A-site of ribosomes during protein biosynthesis. The chain is Elongation factor Tu from Chlorobium phaeovibrioides (strain DSM 265 / 1930) (Prosthecochloris vibrioformis (strain DSM 265)).